The primary structure comprises 37 residues: Large ribosomal subunit protein bL36 (37 aa).

The protein belongs to the bacterial ribosomal protein bL36 family.

In Colwellia psychrerythraea (strain 34H / ATCC BAA-681) (Vibrio psychroerythus), this protein is Large ribosomal subunit protein bL36.